Consider the following 438-residue polypeptide: Chromosomal replication initiator protein DnaA (438 aa).

The segment at 1–71 (MTTKEFLTII…CFEIYDGSKP (71 aa)) is domain I, interacts with DnaA modulators. The interval 71-100 (PTIEIKLSNEKKSKKEILKEQTQNESTEST) is domain II. Positions 101-315 (ILNPSYTFDS…GVLIRINASA (215 aa)) are domain III, AAA+ region. ATP-binding residues include glycine 145, glycine 147, lysine 148, and threonine 149. Positions 316 to 438 (SLLNQEITLP…LKNKIINSRE (123 aa)) are domain IV, binds dsDNA.

Belongs to the DnaA family. In terms of assembly, oligomerizes as a right-handed, spiral filament on DNA at oriC.

The protein resides in the cytoplasm. Functionally, plays an essential role in the initiation and regulation of chromosomal replication. ATP-DnaA binds to the origin of replication (oriC) to initiate formation of the DNA replication initiation complex once per cell cycle. Binds the DnaA box (a 9 base pair repeat at the origin) and separates the double-stranded (ds)DNA. Forms a right-handed helical filament on oriC DNA; dsDNA binds to the exterior of the filament while single-stranded (ss)DNA is stabiized in the filament's interior. The ATP-DnaA-oriC complex binds and stabilizes one strand of the AT-rich DNA unwinding element (DUE), permitting loading of DNA polymerase. After initiation quickly degrades to an ADP-DnaA complex that is not apt for DNA replication. Binds acidic phospholipids. This chain is Chromosomal replication initiator protein DnaA, found in Aliarcobacter butzleri (strain RM4018) (Arcobacter butzleri).